The sequence spans 301 residues: 2-(hydroxymethyl)glutarate dehydrogenase (301 aa).

NAD(+)-binding positions include 8-22 (GFIGLGAMGKPMAIN) and serine 99. Lysine 174 is an active-site residue. Position 243 (lysine 243) interacts with NAD(+).

It belongs to the HIBADH-related family. As to quaternary structure, homotetramer.

The catalysed reaction is (S)-2-hydroxymethylglutarate + NAD(+) = 2-formylglutarate + NADH + H(+). The protein operates within cofactor degradation; nicotinate degradation; propanoate and pyruvate from 6-hydroxynicotinate: step 3/8. Functionally, catalyzes the conversion of 2-formylglutarate to (S)-2-hydroxymethylglutarate. Has very low activity with (S)-3-hydroxyisobutyrate. This Eubacterium barkeri (Clostridium barkeri) protein is 2-(hydroxymethyl)glutarate dehydrogenase.